The primary structure comprises 708 residues: Metal-pseudopaline receptor CntO (708 aa).

Residues 1–21 (MRVSVSLVLGVGLGCSSPALW) form the signal peptide. The TBDR plug domain maps to 63 to 169 (RIEDIPQAIS…PGGTVNLVTK (107 aa)). The 535-residue stretch at 174–708 (ERFARLHASA…NLTMSLTLNY (535 aa)) folds into the TBDR beta-barrel domain.

This sequence belongs to the TonB-dependent receptor family.

Its subcellular location is the cell outer membrane. Functionally, transports the metallophore pseudopaline, which is involved in the acquisition of nickel and zinc, and thus enables bacterial growth inside the host, where metal access is limited. Is probably involved in the import of pseudopaline-metal complexes. This chain is Metal-pseudopaline receptor CntO, found in Pseudomonas aeruginosa (strain UCBPP-PA14).